The following is a 171-amino-acid chain: 3-hydroxydecanoyl-[acyl-carrier-protein] dehydratase (171 aa).

Residue His-70 is part of the active site.

Belongs to the thioester dehydratase family. FabA subfamily. In terms of assembly, homodimer.

The protein localises to the cytoplasm. It catalyses the reaction a (3R)-hydroxyacyl-[ACP] = a (2E)-enoyl-[ACP] + H2O. It carries out the reaction (3R)-hydroxydecanoyl-[ACP] = (2E)-decenoyl-[ACP] + H2O. The catalysed reaction is (2E)-decenoyl-[ACP] = (3Z)-decenoyl-[ACP]. The protein operates within lipid metabolism; fatty acid biosynthesis. In terms of biological role, necessary for the introduction of cis unsaturation into fatty acids. Catalyzes the dehydration of (3R)-3-hydroxydecanoyl-ACP to E-(2)-decenoyl-ACP and then its isomerization to Z-(3)-decenoyl-ACP. Can catalyze the dehydratase reaction for beta-hydroxyacyl-ACPs with saturated chain lengths up to 16:0, being most active on intermediate chain length. This is 3-hydroxydecanoyl-[acyl-carrier-protein] dehydratase from Stenotrophomonas maltophilia (strain K279a).